The following is a 797-amino-acid chain: Hid-1 family protein P27G11.12 (797 aa).

Belongs to the hid-1 family.

The protein resides in the cytoplasm. Its subcellular location is the nucleus. The sequence is that of Hid-1 family protein P27G11.12 from Schizosaccharomyces pombe (strain 972 / ATCC 24843) (Fission yeast).